We begin with the raw amino-acid sequence, 168 residues long: uncharacterized protein (168 aa).

Disordered stretches follow at residues 1-81 and 119-150; these read MSSA…GRSW and RDLS…STVA. Positions 7 to 34 are enriched in low complexity; the sequence is SRTSRSKATGASSSSISSSIRASPSSSS. The segment covering 43 to 67 has biased composition (basic residues); it reads TRRRRRRTGRRSTKRSIISPRRRRM. Residues 123-146 are compositionally biased toward polar residues; sequence ESASTGSENLSRKASNQSQSQGRL.

This is an uncharacterized protein from Human adenovirus C serotype 2 (HAdV-2).